The following is a 263-amino-acid chain: Phosphatidylserine decarboxylase proenzyme (263 aa).

Active-site charge relay system; for autoendoproteolytic cleavage activity residues include aspartate 90, histidine 146, and serine 230. Residue serine 230 is the Schiff-base intermediate with substrate; via pyruvic acid; for decarboxylase activity of the active site. Serine 230 carries the post-translational modification Pyruvic acid (Ser); by autocatalysis.

It belongs to the phosphatidylserine decarboxylase family. PSD-B subfamily. Prokaryotic type I sub-subfamily. As to quaternary structure, heterodimer of a large membrane-associated beta subunit and a small pyruvoyl-containing alpha subunit. Requires pyruvate as cofactor. Is synthesized initially as an inactive proenzyme. Formation of the active enzyme involves a self-maturation process in which the active site pyruvoyl group is generated from an internal serine residue via an autocatalytic post-translational modification. Two non-identical subunits are generated from the proenzyme in this reaction, and the pyruvate is formed at the N-terminus of the alpha chain, which is derived from the carboxyl end of the proenzyme. The autoendoproteolytic cleavage occurs by a canonical serine protease mechanism, in which the side chain hydroxyl group of the serine supplies its oxygen atom to form the C-terminus of the beta chain, while the remainder of the serine residue undergoes an oxidative deamination to produce ammonia and the pyruvoyl prosthetic group on the alpha chain. During this reaction, the Ser that is part of the protease active site of the proenzyme becomes the pyruvoyl prosthetic group, which constitutes an essential element of the active site of the mature decarboxylase.

Its subcellular location is the cell membrane. The enzyme catalyses a 1,2-diacyl-sn-glycero-3-phospho-L-serine + H(+) = a 1,2-diacyl-sn-glycero-3-phosphoethanolamine + CO2. It functions in the pathway phospholipid metabolism; phosphatidylethanolamine biosynthesis; phosphatidylethanolamine from CDP-diacylglycerol: step 2/2. In terms of biological role, catalyzes the formation of phosphatidylethanolamine (PtdEtn) from phosphatidylserine (PtdSer). The protein is Phosphatidylserine decarboxylase proenzyme of Bacillus subtilis (strain 168).